Reading from the N-terminus, the 878-residue chain is Probable di- and tripeptidase DUG2 (878 aa).

WD repeat units follow at residues 18–57 (NHAF…LIHT), 68–107 (HTRS…IRDD), 235–274 (RFNQ…GQNT), 282–322 (DKID…IIST), and 362–405 (PQQG…SAVP). Residue H520 coordinates Zn(2+). D522 is a catalytic residue. D553 provides a ligand contact to Zn(2+). E586 serves as the catalytic Proton acceptor. E587 is a binding site for Zn(2+). A WD 6 repeat occupies 608–651 (IDWILLSNSTWVDQEHPCLNYGLRGVINAQIKVWSDKPDGHSGL). Residue H853 participates in Zn(2+) binding.

Belongs to the peptidase M20A family. Component of the GSH degradosomal complex composed of at least DUG1, DUG2 and DUG3. The cofactor is Zn(2+).

The protein localises to the cytoplasm. It localises to the nucleus. Functionally, component of the GSH degradosomal complex involved in the degradation of glutathione (GSH) and other peptides containing a gamma-glu-X bond. The protein is Probable di- and tripeptidase DUG2 (DUG2) of Saccharomyces cerevisiae (strain ATCC 204508 / S288c) (Baker's yeast).